The primary structure comprises 105 residues: Large ribosomal subunit protein uL24 (105 aa).

The protein belongs to the universal ribosomal protein uL24 family. As to quaternary structure, part of the 50S ribosomal subunit.

In terms of biological role, one of two assembly initiator proteins, it binds directly to the 5'-end of the 23S rRNA, where it nucleates assembly of the 50S subunit. One of the proteins that surrounds the polypeptide exit tunnel on the outside of the subunit. This Nitrosomonas europaea (strain ATCC 19718 / CIP 103999 / KCTC 2705 / NBRC 14298) protein is Large ribosomal subunit protein uL24.